The sequence spans 855 residues: Homeobox-leucine zipper protein HOX33 (855 aa).

Residues 1–21 form a disordered region; the sequence is MAAAAVGGRGERLSSSSPTAA. The segment at residues 26 to 89 is a DNA-binding region (homeobox); the sequence is DAGKYVRYTP…NRRCREKQRK (64 aa). A coiled-coil region spans residues 84-126; it reads REKQRKEASRLQTVNRKLNAMNKLLMEENDRLQKQVSRLVYEN. An START domain is found at 168-390; the sequence is DANNPAGLLA…LRHIRQIAHE (223 aa).

This sequence belongs to the HD-ZIP homeobox family. Class III subfamily. As to expression, expressed in seedlings, roots, stems, leaf sheaths and blades and panicles.

It is found in the nucleus. Its function is as follows. Probable transcription factor. The chain is Homeobox-leucine zipper protein HOX33 (HOX33) from Oryza sativa subsp. indica (Rice).